The primary structure comprises 632 residues: 1-deoxy-D-xylulose-5-phosphate synthase (632 aa).

Residues H79 and 120-122 contribute to the thiamine diphosphate site; that span reads GHA. D152 is a Mg(2+) binding site. Thiamine diphosphate is bound by residues 153 to 154, N181, F293, and E377; that span reads GA. Mg(2+) is bound at residue N181.

The protein belongs to the transketolase family. DXPS subfamily. Homodimer. The cofactor is Mg(2+). Thiamine diphosphate is required as a cofactor.

It catalyses the reaction D-glyceraldehyde 3-phosphate + pyruvate + H(+) = 1-deoxy-D-xylulose 5-phosphate + CO2. The protein operates within metabolic intermediate biosynthesis; 1-deoxy-D-xylulose 5-phosphate biosynthesis; 1-deoxy-D-xylulose 5-phosphate from D-glyceraldehyde 3-phosphate and pyruvate: step 1/1. Its function is as follows. Catalyzes the acyloin condensation reaction between C atoms 2 and 3 of pyruvate and glyceraldehyde 3-phosphate to yield 1-deoxy-D-xylulose-5-phosphate (DXP). This chain is 1-deoxy-D-xylulose-5-phosphate synthase, found in Parabacteroides distasonis (strain ATCC 8503 / DSM 20701 / CIP 104284 / JCM 5825 / NCTC 11152).